Here is a 510-residue protein sequence, read N- to C-terminus: Mitogen-activated protein kinase 9 (510 aa).

Residues 23–314 (YQIQEVIGKG…AEEALADPYF (292 aa)) form the Protein kinase domain. ATP contacts are provided by residues 29 to 37 (IGKGSYGVV) and lysine 52. The active-site Proton acceptor is aspartate 149. Position 185 is a phosphothreonine (threonine 185). The short motif at 185–187 (TDY) is the TXY element. Tyrosine 187 carries the phosphotyrosine modification. At threonine 190 the chain carries Phosphothreonine. Residues 393–461 (NYGKGEKGSP…SDYRNGTSQT (69 aa)) form a disordered region. Over residues 410–431 (LPRERVPAPKKENGSHNHDIEN) the composition is skewed to basic and acidic residues. Residues 433-461 (SIASLVTTLESPPTSQHEGSDYRNGTSQT) are compositionally biased toward polar residues.

Belongs to the protein kinase superfamily. CMGC Ser/Thr protein kinase family. MAP kinase subfamily. In terms of processing, dually phosphorylated on Thr-185 and Tyr-187, which activates the enzyme.

The enzyme catalyses L-seryl-[protein] + ATP = O-phospho-L-seryl-[protein] + ADP + H(+). The catalysed reaction is L-threonyl-[protein] + ATP = O-phospho-L-threonyl-[protein] + ADP + H(+). Its activity is regulated as follows. Activated by threonine and tyrosine phosphorylation. The polypeptide is Mitogen-activated protein kinase 9 (MPK9) (Arabidopsis thaliana (Mouse-ear cress)).